The sequence spans 745 residues: MSLLTRLCKGNVPLRLNTLKHLSQCGYSSHAKFSEHKPIEKIRNIGISAHIDSGKTTLTERILFYTGRIAEMHEVRGKDNVGATMDSMELERQRGITIQSAATYTLWKDTNINIIDTPGHVDFTVEVERALRVLDGAVLVLCAVGGVQSQTLTVNRQMKRYNVPCLAFINKLDRLGSNPYRVLSQMRSKMNHNAAFIQLPIGVESNCKGIVDLVQEKAIYFEGDHGMDIRLDEIPQDMRAESGERRQELIEHLSNADEKFGELFLEEKPFTEKDIKEALRRTCIQRTFTPVLVGTALKNKGVQPLLDAVLDYLPNPGEVENLAFIEHEGKEPEKVVLNPARDGKDPFMGLAFKLEAGRFGQLTYLRCYQGVLRKGDNIFNARTNKKVRIARLVRLHSNQMEDVNEVFAGDIFALFGVDCASGDTFTTNPKNHLAMESIFVPEPVVSMAIKPNNTKDRDNFSKAIARFTKEDPTFHFHFDNDVKETLVSGMGELHLEIYAQRMEREYGCPVTLGKPKVAFRETLVGPCEFDYLHKKQSGGSGQYARIIGIMEPLPPSQNTLLEFVDETVGTNVPKQFIPGVEKGYREMAERGMLSGHKLSGIRFRLQDGGHHIVDSSELAFMLAAHGAIKEVFQNGSWQILEPIMLVEVTAPEEFQGAVMGHLSKRHGIITGTEGTEGWFTVYAEVPLNDMFGYAGELRSSTQGKGEFTMEYSRYSPCLPEVQEQIVRQYQESQGVGQAEKKKKKN.

The 278-residue stretch at Glu40–Gly317 folds into the tr-type G domain. GTP contacts are provided by residues Ala49–Thr56, Asp116–His120, and Asn170–Asp173.

Belongs to the TRAFAC class translation factor GTPase superfamily. Classic translation factor GTPase family. EF-G/EF-2 subfamily.

It is found in the mitochondrion. It functions in the pathway protein biosynthesis; polypeptide chain elongation. Mitochondrial GTPase that catalyzes the GTP-dependent ribosomal translocation step during translation elongation. During this step, the ribosome changes from the pre-translocational (PRE) to the post-translocational (POST) state as the newly formed A-site-bound peptidyl-tRNA and P-site-bound deacylated tRNA move to the P and E sites, respectively. Catalyzes the coordinated movement of the two tRNA molecules, the mRNA and conformational changes in the ribosome. Essential during development as it acts as a retrograde signal from mitochondria to the nucleus to slow down cell proliferation if mitochondrial energy output is low. The chain is Elongation factor G, mitochondrial from Drosophila willistoni (Fruit fly).